A 322-amino-acid chain; its full sequence is Serine protease 38 (322 aa).

A signal peptide spans 1-28 (MAALTSGLGVLGYLLFPLLLASPTWVTS). A propeptide spans 29–55 (VSRRHPKSQANSLSGDVACGQPVLQGK) (activation peptide). Positions 56–289 (LLGGEFARDR…FLSWIRYHLQ (234 aa)) constitute a Peptidase S1 domain. A disulfide bond links C81 and C97. Residues H96 and D146 each act as charge relay system in the active site. An N-linked (GlcNAc...) asparagine glycan is attached at N176. 3 disulfide bridges follow: C179-C247, C210-C226, and C237-C265. The active-site Charge relay system is the S241. N-linked (GlcNAc...) asparagine glycosylation is found at N250 and N276.

This sequence belongs to the peptidase S1 family.

The protein localises to the secreted. This is Serine protease 38 (Prss38) from Mus musculus (Mouse).